Reading from the N-terminus, the 193-residue chain is Acyl carrier protein phosphodiesterase (193 aa).

This sequence belongs to the AcpH family.

It catalyses the reaction holo-[ACP] + H2O = apo-[ACP] + (R)-4'-phosphopantetheine + H(+). Functionally, converts holo-ACP to apo-ACP by hydrolytic cleavage of the phosphopantetheine prosthetic group from ACP. The sequence is that of Acyl carrier protein phosphodiesterase from Salmonella newport (strain SL254).